Consider the following 2208-residue polypeptide: RNA-directed RNA polymerase L (2208 aa).

Residues 26–284 (KEALLSQVEV…SHAGTTVPEC (259 aa)) are endonuclease. The Mn(2+) site is built by Glu-51, Asp-89, and Glu-102. The active site involves Lys-115. Residues 1172–1370 (CDMKMAVNNG…FLSSKLNKFV (199 aa)) form the RdRp catalytic domain. Position 1330 (Asp-1330) interacts with Mg(2+).

Belongs to the Bunyavirales RNA polymerase family. In terms of assembly, homomultimer; the oligomeric structure is essential for the polymerase activity. Interacts with nucleoprotein N. Interacts with protein Z; this interaction inhibits viral transcription and replication, Z partially blocks the product exit tunnel for the releasing nascent RNA product. The cofactor is Mn(2+). Requires Mg(2+) as cofactor.

The protein resides in the virion. Its subcellular location is the host cytoplasm. The enzyme catalyses RNA(n) + a ribonucleoside 5'-triphosphate = RNA(n+1) + diphosphate. Functionally, RNA-dependent RNA polymerase, which is responsible for the replication and transcription of the viral RNA genome using antigenomic RNA as an intermediate. During transcription, synthesizes subgenomic RNAs and assures their capping by a cap-snatching mechanism, which involves the endonuclease activity cleaving the host capped pre-mRNAs. These short capped RNAs are then used as primers for viral transcription. The 3'-end of subgenomic mRNAs molecules are heterogeneous and not polyadenylated. The replicase function is to direct synthesis of antigenomic and genomic RNA which are encapsidated and non capped. As a consequence of the use of the same enzyme for both transcription and replication, these mechanisms need to be well coordinated. These processes may be regulated by proteins N and Z in a dose-dependent manner. Z protein inhibits the viral polymerase L und thus the viral transcription and RNA synthesis. This chain is RNA-directed RNA polymerase L, found in Hylaeamys megacephalus (Large-headed rice rat).